We begin with the raw amino-acid sequence, 663 residues long: Epithelial sodium channel subunit gamma-2 (663 aa).

The Cytoplasmic segment spans residues Met-1–Trp-55. The helical transmembrane segment at Ile-56–Leu-76 threads the bilayer. Over Met-77–Cys-544 the chain is Extracellular. Intrachain disulfides connect Cys-101–Cys-286, Cys-209–Cys-217, Cys-263–Cys-270, Cys-375–Cys-460, Cys-397–Cys-456, Cys-401–Cys-452, Cys-410–Cys-437, and Cys-412–Cys-426. The chain crosses the membrane as a helical span at residues Ser-545–Leu-565. The Cytoplasmic portion of the chain corresponds to Arg-566–Phe-663.

This sequence belongs to the amiloride-sensitive sodium channel (TC 1.A.6) family. SCNN1G subfamily. As to quaternary structure, component of the heterotrimeric epithelial sodium channel (ENaC) composed of an alpha/SCNN1A, a beta/SCNN1B and a gamma/SCNN1G subunit.

It localises to the apical cell membrane. It catalyses the reaction Na(+)(in) = Na(+)(out). Originally identified and characterized by its inhibition by the diuretic drug amiloride. In terms of biological role, this is one of the three pore-forming subunits of the heterotrimeric epithelial sodium channel (ENaC), a critical regulator of sodium balance and fluid homeostasis. ENaC operates in epithelial tissues, where it mediates the electrodiffusion of sodium ions from extracellular fluid through the apical membrane of cells, with water following osmotically. In Xenopus laevis (African clawed frog), this protein is Epithelial sodium channel subunit gamma-2 (scnn1g-b).